A 519-amino-acid chain; its full sequence is Cyclin-dependent kinase C-1 (519 aa).

A Protein kinase domain is found at 25 to 325 (FEKLEQIGEG…AQDALDAEYF (301 aa)). Residues 31 to 39 (IGEGTYGQV) and K54 each bind ATP. Position 35 is a phosphothreonine (T35). Y36 carries the post-translational modification Phosphotyrosine. Catalysis depends on D164, which acts as the Proton acceptor. T198 is modified (phosphothreonine). The segment covering 336-348 (SLPKYESSHEFQT) has biased composition (basic and acidic residues). Positions 336–519 (SLPKYESSHE…RNQQQYGNWQ (184 aa)) are disordered. A compositionally biased stretch (gly residues) spans 426–444 (GNQGGGYPNRGGQGGGGSY). Positions 445–454 (GNAPYPQQGR) are enriched in low complexity. Gly residues-rich tracts occupy residues 464 to 483 (GMAG…GGGS) and 490 to 499 (GPYGPSGPGR). The segment covering 505 to 519 (QQGGSRNQQQYGNWQ) has biased composition (polar residues).

This sequence belongs to the protein kinase superfamily. CMGC Ser/Thr protein kinase family. CDC2/CDKX subfamily.

It carries out the reaction L-seryl-[protein] + ATP = O-phospho-L-seryl-[protein] + ADP + H(+). The enzyme catalyses L-threonyl-[protein] + ATP = O-phospho-L-threonyl-[protein] + ADP + H(+). It catalyses the reaction [DNA-directed RNA polymerase] + ATP = phospho-[DNA-directed RNA polymerase] + ADP + H(+). The sequence is that of Cyclin-dependent kinase C-1 (CDKC-1) from Oryza sativa subsp. japonica (Rice).